The primary structure comprises 160 residues: Endoribonuclease YbeY (160 aa).

3 residues coordinate Zn(2+): His112, His116, and His122. The disordered stretch occupies residues 141 to 160 (ELGHPDPYACDDEEPPSKEK).

Belongs to the endoribonuclease YbeY family. Requires Zn(2+) as cofactor.

It is found in the cytoplasm. Its function is as follows. Single strand-specific metallo-endoribonuclease involved in late-stage 70S ribosome quality control and in maturation of the 3' terminus of the 16S rRNA. This Pseudomonas paraeruginosa (strain DSM 24068 / PA7) (Pseudomonas aeruginosa (strain PA7)) protein is Endoribonuclease YbeY.